The following is a 349-amino-acid chain: Flap endonuclease 1-B (349 aa).

An N-domain region spans residues 1 to 105 (MGIKGLTKLL…GELAKRLARR (105 aa)). D34 is a binding site for Mg(2+). R71 serves as a coordination point for DNA. D87, E159, E161, D180, and D182 together coordinate Mg(2+). Residues 123–254 (DMEKYSKRTV…QTALKLIRQH (132 aa)) form an I-domain region. E159 serves as a coordination point for DNA. DNA-binding residues include G232 and D234. D234 provides a ligand contact to Mg(2+).

The protein belongs to the XPG/RAD2 endonuclease family. FEN1 subfamily. As to quaternary structure, interacts with PCNA. Three molecules of FEN1 bind to one PCNA trimer with each molecule binding to one PCNA monomer. PCNA stimulates the nuclease activity without altering cleavage specificity. Mg(2+) serves as cofactor. Post-translationally, phosphorylated. Phosphorylation upon DNA damage induces relocalization to the nuclear plasma.

It is found in the nucleus. The protein resides in the nucleolus. The protein localises to the nucleoplasm. Its subcellular location is the mitochondrion. Functionally, structure-specific nuclease with 5'-flap endonuclease and 5'-3' exonuclease activities involved in DNA replication and repair. During DNA replication, cleaves the 5'-overhanging flap structure that is generated by displacement synthesis when DNA polymerase encounters the 5'-end of a downstream Okazaki fragment. It enters the flap from the 5'-end and then tracks to cleave the flap base, leaving a nick for ligation. Also involved in the long patch base excision repair (LP-BER) pathway, by cleaving within the apurinic/apyrimidinic (AP) site-terminated flap. Acts as a genome stabilization factor that prevents flaps from equilibrating into structures that lead to duplications and deletions. Also possesses 5'-3' exonuclease activity on nicked or gapped double-stranded DNA, and exhibits RNase H activity. Also involved in replication and repair of rDNA and in repairing mitochondrial DNA. The sequence is that of Flap endonuclease 1-B from Physcomitrium patens (Spreading-leaved earth moss).